Here is a 253-residue protein sequence, read N- to C-terminus: Snake venom serine protease homolog HS120 (253 aa).

The first 18 residues, 1–18 (MVLIRVIANLLILQLSYA), serve as a signal peptide directing secretion. Positions 19–24 (QKSSEL) are excised as a propeptide. The region spanning 25-244 (VIGGDECNIN…YLPWIQSIIA (220 aa)) is the Peptidase S1 domain. 6 disulfides stabilise this stretch: Cys31–Cys158, Cys49–Cys65, Cys98–Cys251, Cys137–Cys205, Cys169–Cys184, and Cys195–Cys220. N-linked (GlcNAc...) asparagine glycans are attached at residues Asn116 and Asn165.

This sequence belongs to the peptidase S1 family. Snake venom subfamily. As to expression, expressed by the venom gland.

Its subcellular location is the secreted. Its function is as follows. Snake venom serine protease homolog that may act in the hemostasis system of the prey. The chain is Snake venom serine protease homolog HS120 from Bothrops jararaca (Jararaca).